The following is a 274-amino-acid chain: MTAPAADDRIDEIERAITKSRRYQTVAPATVRRLARAALVAARGDVPDAVKRTKRGLHEIYGAFLPPSPPNYAALLRHLDSAVDAGDDEAVRAALLRAMSVHISTRERLPHLDEFYRELFRHLPRPNTLRDLACGLNPLAAPWMGLPAETVYIASDIDARLVGFVDEALTRLNVPHRTNVADLLEDRLDEPADVTLLLKTLPCLETQQRGSGWEVIDIVNSPNIVVTFPTKSLGQRSKGMFQNYSQSFESQARERSCRIQRLEIGNELIYVIQK.

S-adenosyl-L-methionine contacts are provided by residues 102–108 (HISTRER), Ala-133, Asp-156, 182–183 (DL), Leu-198, and Gln-207.

This sequence belongs to the methyltransferase superfamily. Aminoglycoside resistance family.

It carries out the reaction guanosine(1405) in 16S rRNA + S-adenosyl-L-methionine = N(7)-methylguanosine(1405) in 16S rRNA + S-adenosyl-L-homocysteine. Specifically methylates the N(7) position of guanine 1405 in 16S rRNA. Confers resistance to various aminoglycosides, including gentamicin, kanamycin and sisomicin. The protein is 16S rRNA (guanine(1405)-N(7))-methyltransferase (sgm) of Micromonospora zionensis.